Consider the following 120-residue polypeptide: MFSLQGYDAFLGFLLISAAVPVLALVTNKLLSPKSQTGERELTYESGMEPIGGAWIQFNIRYYMFALVFVIFDVETVFLYPWAVAFHKLGLLAFIEALIFIAILIVALAYAWRKGALEWS.

Helical transmembrane passes span 6–26 (GYDA…LALV), 64–84 (MFAL…PWAV), and 89–109 (LGLL…VALA).

It belongs to the complex I subunit 3 family. As to quaternary structure, NDH-1 can be composed of about 15 different subunits; different subcomplexes with different compositions have been identified which probably have different functions.

It localises to the cellular thylakoid membrane. It carries out the reaction a plastoquinone + NADH + (n+1) H(+)(in) = a plastoquinol + NAD(+) + n H(+)(out). The catalysed reaction is a plastoquinone + NADPH + (n+1) H(+)(in) = a plastoquinol + NADP(+) + n H(+)(out). In terms of biological role, NDH-1 shuttles electrons from an unknown electron donor, via FMN and iron-sulfur (Fe-S) centers, to quinones in the respiratory and/or the photosynthetic chain. The immediate electron acceptor for the enzyme in this species is believed to be plastoquinone. Couples the redox reaction to proton translocation, and thus conserves the redox energy in a proton gradient. Cyanobacterial NDH-1 also plays a role in inorganic carbon-concentration. This chain is NAD(P)H-quinone oxidoreductase subunit 3, found in Prochlorococcus marinus (strain MIT 9211).